The chain runs to 81 residues: Short neurotoxin SN160 (81 aa).

The N-terminal stretch at 1–21 (MKTLLLTLVVVTIVCLDLGYT) is a signal peptide. Cystine bridges form between cysteine 24/cysteine 43, cysteine 38/cysteine 60, cysteine 62/cysteine 73, and cysteine 74/cysteine 79.

It belongs to the three-finger toxin family. Short-chain subfamily. Type I alpha-neurotoxin sub-subfamily. As to expression, expressed by the venom gland.

The protein resides in the secreted. Functionally, binds to muscle nicotinic acetylcholine receptor (nAChR) and inhibit acetylcholine from binding to the receptor, thereby impairing neuromuscular transmission. The protein is Short neurotoxin SN160 of Hydrophis hardwickii (Hardwick's spine-bellied seasnake).